A 384-amino-acid chain; its full sequence is Monomeric sarcosine oxidase (384 aa).

6-36 is a binding site for FAD; sequence DVIVIGLGGMGSAAAHHLSARGARVLGLEKF. The residue at position 315 (cysteine 315) is an S-8alpha-FAD cysteine.

The protein belongs to the MSOX/MTOX family. MSOX subfamily. As to quaternary structure, monomer. It depends on FAD as a cofactor.

It localises to the cytoplasm. It carries out the reaction sarcosine + O2 + H2O = formaldehyde + glycine + H2O2. Catalyzes the oxidative demethylation of sarcosine. The sequence is that of Monomeric sarcosine oxidase from Streptomyces avermitilis (strain ATCC 31267 / DSM 46492 / JCM 5070 / NBRC 14893 / NCIMB 12804 / NRRL 8165 / MA-4680).